We begin with the raw amino-acid sequence, 178 residues long: Adenine phosphoribosyltransferase (178 aa).

This sequence belongs to the purine/pyrimidine phosphoribosyltransferase family. As to quaternary structure, homodimer.

The protein resides in the cytoplasm. The enzyme catalyses AMP + diphosphate = 5-phospho-alpha-D-ribose 1-diphosphate + adenine. The protein operates within purine metabolism; AMP biosynthesis via salvage pathway; AMP from adenine: step 1/1. In terms of biological role, catalyzes a salvage reaction resulting in the formation of AMP, that is energically less costly than de novo synthesis. The protein is Adenine phosphoribosyltransferase of Cereibacter sphaeroides (strain ATCC 17029 / ATH 2.4.9) (Rhodobacter sphaeroides).